A 355-amino-acid chain; its full sequence is Methylthioribose-1-phosphate isomerase (355 aa).

Substrate is bound by residues 50–52 (RGA), Arg93, and Gln198. The Proton donor role is filled by Asp239. 249–250 (NK) is a substrate binding site.

The protein belongs to the eIF-2B alpha/beta/delta subunits family. MtnA subfamily. In terms of assembly, homodimer.

It catalyses the reaction 5-(methylsulfanyl)-alpha-D-ribose 1-phosphate = 5-(methylsulfanyl)-D-ribulose 1-phosphate. It participates in amino-acid biosynthesis; L-methionine biosynthesis via salvage pathway; L-methionine from S-methyl-5-thio-alpha-D-ribose 1-phosphate: step 1/6. Catalyzes the interconversion of methylthioribose-1-phosphate (MTR-1-P) into methylthioribulose-1-phosphate (MTRu-1-P). In Geobacillus kaustophilus (strain HTA426), this protein is Methylthioribose-1-phosphate isomerase.